The sequence spans 271 residues: Solute carrier family 66 member 2 (271 aa).

3 helical membrane-spanning segments follow: residues 7-27 (GWLL…AMVF), 49-69 (FSTH…LFWF), and 72-92 (HFES…LLML). Residues 14 to 80 (HQLVSWVAAG…RHFESPLLWQ (67 aa)) enclose the PQ-loop 1 domain. A Phosphoserine modification is found at serine 110. A run of 3 helical transmembrane segments spans residues 145–165 (DYVQ…YLSI), 168–188 (ALFV…LGVP), and 232–252 (VCGL…YAFA). Positions 178-233 (AVLTEAMLGVPQLYRNYCHRSTEGMSLKMVLMWTSGDTFKTAYFLLNGAPLQFSVC) constitute a PQ-loop 2 domain.

It is found in the membrane. The protein is Solute carrier family 66 member 2 (Slc66a2) of Mus musculus (Mouse).